An 879-amino-acid chain; its full sequence is Exocyst complex component 1 (879 aa).

The disordered stretch occupies residues 29–94; sequence SQYSESEYDP…ATSLGNNDGD (66 aa). Positions 40–52 are enriched in basic and acidic residues; that stretch reads ETTHSESDSENHH. Residues 64–76 are compositionally biased toward polar residues; it reads FLSQSNDNVSNGP. The segment covering 77–91 has biased composition (low complexity); that stretch reads SNNTLSSSATSLGNN. 2 coiled-coil regions span residues 165–187 and 226–248; these read YNKQLQDMKKYIEHIEGKNNKME and KGLKMAIEAAEDLKRALTTKLKS. 2 disordered regions span residues 371 to 413 and 455 to 557; these read QNDF…GKDG and GQRN…PDAP. Over residues 373–409 the composition is skewed to low complexity; sequence DFFSSSSSSKKSIDSLNNNTSTSTPSKNSSSSSSSSS. The segment covering 480–500 has biased composition (basic residues); the sequence is KKSSKKDKKDKKDKKDKKDKK. Positions 519-532 are enriched in polar residues; sequence DSNSPKSPNNAVNG. Pro residues predominate over residues 541-551; it reads SPPPPPPPPPK.

The protein belongs to the SEC3 family. The exocyst complex is composed of sec3/exoc1, sec5/exoc2, sec6/exoc3, sec8/exoc4, sec10/exoc5, sec15/exoc6, exo70/exoc7 and exo84/exoc8.

The protein localises to the midbody. Its subcellular location is the midbody ring. Its function is as follows. Component of the exocyst complex involved in the docking of exocytic vesicles with fusion sites on the plasma membrane. The sequence is that of Exocyst complex component 1 (exoc1) from Dictyostelium discoideum (Social amoeba).